The chain runs to 328 residues: Phenylalanine--tRNA ligase alpha subunit (328 aa).

Glutamate 253 lines the Mg(2+) pocket.

Belongs to the class-II aminoacyl-tRNA synthetase family. Phe-tRNA synthetase alpha subunit type 1 subfamily. As to quaternary structure, tetramer of two alpha and two beta subunits. It depends on Mg(2+) as a cofactor.

Its subcellular location is the cytoplasm. It catalyses the reaction tRNA(Phe) + L-phenylalanine + ATP = L-phenylalanyl-tRNA(Phe) + AMP + diphosphate + H(+). The sequence is that of Phenylalanine--tRNA ligase alpha subunit from Coxiella burnetii (strain Dugway 5J108-111).